A 187-amino-acid chain; its full sequence is Ribosome hibernation promotion factor (187 aa).

It belongs to the HPF/YfiA ribosome-associated protein family. Long HPF subfamily. Interacts with 100S ribosomes.

The protein localises to the cytoplasm. Functionally, involved in 100S ribosome formation from 70S ribosomes; 100S ribosomes are probably translationally inactive. Ribosome hibernation may be used by the cell to decrease overall energy consumption under nutrient-limiting conditions. Unlike E.coli, 100S ribosomes are present from mid-exponential growth, peak during the transition from log to stationary phase and then decrease. The chain is Ribosome hibernation promotion factor from Listeria monocytogenes serotype 1/2a (strain 10403S).